The following is a 160-amino-acid chain: UPF0225 protein CGSHiEE_01665 (160 aa).

The protein belongs to the UPF0225 family.

This chain is UPF0225 protein CGSHiEE_01665, found in Haemophilus influenzae (strain PittEE).